The following is a 500-amino-acid chain: L-arabinose isomerase (500 aa).

The Mn(2+) site is built by glutamate 306, glutamate 331, histidine 348, and histidine 447.

The protein belongs to the arabinose isomerase family. It depends on Mn(2+) as a cofactor.

It catalyses the reaction beta-L-arabinopyranose = L-ribulose. It participates in carbohydrate degradation; L-arabinose degradation via L-ribulose; D-xylulose 5-phosphate from L-arabinose (bacterial route): step 1/3. Functionally, catalyzes the conversion of L-arabinose to L-ribulose. The sequence is that of L-arabinose isomerase from Anoxybacillus flavithermus (strain DSM 21510 / WK1).